The primary structure comprises 45 residues: Alpha-conotoxin-like Lp1.10 (45 aa).

The propeptide occupies Val1–Arg27. Cystine bridges form between Cys30/Cys36 and Cys31/Cys44. A lacks the Ser-Xaa-Pro motif that is crucial for potent interaction with nAChR region spans residues His32–Ala34. Cys44 carries the post-translational modification Cysteine amide.

The protein belongs to the conotoxin A superfamily. As to expression, expressed by the venom duct.

It is found in the secreted. Functionally, alpha-conotoxins act on postsynaptic membranes, they bind to the nicotinic acetylcholine receptors (nAChR) and thus inhibit them. Has possibly a distinct nAChR binding mode from other alpha-conotoxins, due to a different three residue motif (lacks the Ser-Xaa-Pro motif). The polypeptide is Alpha-conotoxin-like Lp1.10 (Conus leopardus (Leopard cone)).